We begin with the raw amino-acid sequence, 143 residues long: 3-dehydroquinate dehydratase (143 aa).

Catalysis depends on tyrosine 22, which acts as the Proton acceptor. Positions 73, 79, and 86 each coordinate substrate. Histidine 99 (proton donor) is an active-site residue. Substrate contacts are provided by residues 100-101 (LS) and arginine 110.

Belongs to the type-II 3-dehydroquinase family. As to quaternary structure, homododecamer.

The catalysed reaction is 3-dehydroquinate = 3-dehydroshikimate + H2O. It participates in metabolic intermediate biosynthesis; chorismate biosynthesis; chorismate from D-erythrose 4-phosphate and phosphoenolpyruvate: step 3/7. In terms of biological role, catalyzes a trans-dehydration via an enolate intermediate. This is 3-dehydroquinate dehydratase from Salinispora tropica (strain ATCC BAA-916 / DSM 44818 / JCM 13857 / NBRC 105044 / CNB-440).